Here is a 269-residue protein sequence, read N- to C-terminus: Neurotrophic factor BDNF precursor form (269 aa).

Residues 1 to 18 form the signal peptide; that stretch reads MTILFLTMVISYFSCMRA. A propeptide spanning residues 19 to 150 is cleaved from the precursor; sequence APLRDAPGMR…AANMSMRVRR (132 aa). 2 disordered regions span residues 39–61 and 82–104; these read AATA…REEL and AAHV…VATA. Asn143 carries N-linked (GlcNAc...) asparagine glycosylation. Intrachain disulfides connect Cys163-Cys230, Cys208-Cys259, and Cys218-Cys261.

It belongs to the NGF-beta family.

Functionally, BDNF promotes the survival of neuronal populations that are all located either in the central nervous system or directly connected to it. The polypeptide is Neurotrophic factor BDNF precursor form (bdnf) (Xiphophorus maculatus (Southern platyfish)).